The following is a 623-amino-acid chain: Bifunctional enzyme CysN/CysC (623 aa).

Residues 1–450 are sulfate adenylyltransferase; that stretch reads MQSVIAYLKQ…HVARARIKGQ (450 aa). The tr-type G domain occupies 14 to 228; sequence KPLLRFITCG…YLEALEPADV (215 aa). A G1 region spans residues 23–30; that stretch reads GSVDDGKS. Position 23–30 (23–30) interacts with GTP; sequence GSVDDGKS. Residues 81-85 form a G2 region; the sequence is GITID. The interval 102-105 is G3; that stretch reads DCPG. GTP-binding positions include 102-106 and 157-160; these read DCPGH and NKMD. Positions 157–160 are G4; the sequence is NKMD. Residues 194–196 form a G5 region; it reads SAL. The segment at 451–623 is adenylyl-sulfate kinase; it reads TPKVLWFTGL…VLSLLGVEGK (173 aa). ATP is bound at residue 459–466; sequence GLSGAGKS. Ser533 acts as the Phosphoserine intermediate in catalysis.

It in the C-terminal section; belongs to the APS kinase family. This sequence in the N-terminal section; belongs to the TRAFAC class translation factor GTPase superfamily. Classic translation factor GTPase family. CysN/NodQ subfamily. As to quaternary structure, heterodimer composed of CysD, the smaller subunit, and CysNC.

The enzyme catalyses sulfate + ATP + H(+) = adenosine 5'-phosphosulfate + diphosphate. It catalyses the reaction adenosine 5'-phosphosulfate + ATP = 3'-phosphoadenylyl sulfate + ADP + H(+). Its pathway is sulfur metabolism; hydrogen sulfide biosynthesis; sulfite from sulfate: step 1/3. It functions in the pathway sulfur metabolism; hydrogen sulfide biosynthesis; sulfite from sulfate: step 2/3. Functionally, with CysD forms the ATP sulfurylase (ATPS) that catalyzes the adenylation of sulfate producing adenosine 5'-phosphosulfate (APS) and diphosphate, the first enzymatic step in sulfur assimilation pathway. APS synthesis involves the formation of a high-energy phosphoric-sulfuric acid anhydride bond driven by GTP hydrolysis by CysN coupled to ATP hydrolysis by CysD. In terms of biological role, APS kinase catalyzes the synthesis of activated sulfate. The chain is Bifunctional enzyme CysN/CysC (cysNC) from Xylella fastidiosa (strain Temecula1 / ATCC 700964).